The following is a 422-amino-acid chain: Exodeoxyribonuclease 7 large subunit (422 aa).

Belongs to the XseA family. Heterooligomer composed of large and small subunits.

The protein localises to the cytoplasm. The catalysed reaction is Exonucleolytic cleavage in either 5'- to 3'- or 3'- to 5'-direction to yield nucleoside 5'-phosphates.. In terms of biological role, bidirectionally degrades single-stranded DNA into large acid-insoluble oligonucleotides, which are then degraded further into small acid-soluble oligonucleotides. The protein is Exodeoxyribonuclease 7 large subunit of Leptospira interrogans serogroup Icterohaemorrhagiae serovar copenhageni (strain Fiocruz L1-130).